A 373-amino-acid chain; its full sequence is Chaperone protein DnaJ (373 aa).

The 66-residue stretch at 4–69 (DYYETLSVER…SKRRIYDTYG (66 aa)) folds into the J domain. The segment at 131 to 209 (GVSKEVKLSR…CHGEGLVKKT (79 aa)) adopts a CR-type zinc-finger fold. Positions 144, 147, 161, 164, 183, 186, 197, and 200 each coordinate Zn(2+). CXXCXGXG motif repeat units lie at residues 144–151 (CWTCEGTG), 161–168 (CPTCNGRG), 183–190 (CPECEGEG), and 197–204 (CNDCHGEG).

The protein belongs to the DnaJ family. Homodimer. It depends on Zn(2+) as a cofactor.

It is found in the cytoplasm. Participates actively in the response to hyperosmotic and heat shock by preventing the aggregation of stress-denatured proteins and by disaggregating proteins, also in an autonomous, DnaK-independent fashion. Unfolded proteins bind initially to DnaJ; upon interaction with the DnaJ-bound protein, DnaK hydrolyzes its bound ATP, resulting in the formation of a stable complex. GrpE releases ADP from DnaK; ATP binding to DnaK triggers the release of the substrate protein, thus completing the reaction cycle. Several rounds of ATP-dependent interactions between DnaJ, DnaK and GrpE are required for fully efficient folding. Also involved, together with DnaK and GrpE, in the DNA replication of plasmids through activation of initiation proteins. This Desulfotalea psychrophila (strain LSv54 / DSM 12343) protein is Chaperone protein DnaJ.